Consider the following 122-residue polypeptide: Holo-[acyl-carrier-protein] synthase (122 aa).

Mg(2+) is bound by residues Asp8 and Glu58.

Belongs to the P-Pant transferase superfamily. AcpS family. It depends on Mg(2+) as a cofactor.

It localises to the cytoplasm. It carries out the reaction apo-[ACP] + CoA = holo-[ACP] + adenosine 3',5'-bisphosphate + H(+). Transfers the 4'-phosphopantetheine moiety from coenzyme A to a Ser of acyl-carrier-protein. The polypeptide is Holo-[acyl-carrier-protein] synthase (Levilactobacillus brevis (strain ATCC 367 / BCRC 12310 / CIP 105137 / JCM 1170 / LMG 11437 / NCIMB 947 / NCTC 947) (Lactobacillus brevis)).